The following is a 274-amino-acid chain: Nitrogenase iron protein (274 aa).

8-15 (GKGGIGKS) contributes to the ATP binding site. Cys94 is a binding site for [4Fe-4S] cluster. Position 97 is an ADP-ribosylarginine; by dinitrogenase reductase ADP-ribosyltransferase (Arg97). Cys131 contributes to the [4Fe-4S] cluster binding site.

The protein belongs to the NifH/BchL/ChlL family. Homodimer. [4Fe-4S] cluster is required as a cofactor. In terms of processing, the reversible ADP-ribosylation of Arg-97 inactivates the nitrogenase reductase and regulates nitrogenase activity.

The catalysed reaction is N2 + 8 reduced [2Fe-2S]-[ferredoxin] + 16 ATP + 16 H2O = H2 + 8 oxidized [2Fe-2S]-[ferredoxin] + 2 NH4(+) + 16 ADP + 16 phosphate + 6 H(+). In terms of biological role, the key enzymatic reactions in nitrogen fixation are catalyzed by the nitrogenase complex, which has 2 components: the iron protein and the molybdenum-iron protein. The chain is Nitrogenase iron protein from Pelodictyon phaeoclathratiforme (strain DSM 5477 / BU-1).